A 565-amino-acid chain; its full sequence is Oxygen-dependent choline dehydrogenase (565 aa).

An FAD-binding site is contributed by 6-35 (DYIIVGAGSAGNTLATRLTEDAGVTVLLLE). The segment at 182–201 (QQEGFGPMDRTVTKNGRRSS) is disordered. Catalysis depends on histidine 475, which acts as the Proton acceptor.

Belongs to the GMC oxidoreductase family. FAD is required as a cofactor.

It catalyses the reaction choline + A = betaine aldehyde + AH2. It carries out the reaction betaine aldehyde + NAD(+) + H2O = glycine betaine + NADH + 2 H(+). The protein operates within amine and polyamine biosynthesis; betaine biosynthesis via choline pathway; betaine aldehyde from choline (cytochrome c reductase route): step 1/1. Involved in the biosynthesis of the osmoprotectant glycine betaine. Catalyzes the oxidation of choline to betaine aldehyde and betaine aldehyde to glycine betaine at the same rate. This chain is Oxygen-dependent choline dehydrogenase, found in Pseudomonas putida (strain ATCC 47054 / DSM 6125 / CFBP 8728 / NCIMB 11950 / KT2440).